A 456-amino-acid polypeptide reads, in one-letter code: Neurexin-3-beta (456 aa).

A signal peptide spans 1-35 (MHLRIHARRNPPRRPAWTLGIWSLFWGCIVSSVWS). Topologically, residues 36–381 (SSNVASSSSS…EVIRESSSTT (346 aa)) are extracellular. Residues 41 to 63 (SSSSSPGSHSQHEHHFHGSKHHS) form a disordered region. The span at 52–63 (HEHHFHGSKHHS) shows a compositional bias: basic residues. One can recognise a Laminin G-like domain in the interval 82–282 (ATYIFGKSGG…NPNIKINGSV (201 aa)). Residues Asp134 and Ile151 each coordinate Ca(2+). Asn181 is a glycosylation site (N-linked (GlcNAc...) asparagine). Positions 233 and 235 each coordinate Ca(2+). 2 N-linked (GlcNAc...) asparagine glycosylation sites follow: Asn279 and Asn323. The segment at 316–340 (ATTTTRKNRSTASIQPTSDDLVSSA) is disordered. Positions 325-340 (STASIQPTSDDLVSSA) are enriched in polar residues. A glycan (O-linked (Xyl...) (heparan sulfate) serine) is linked at Ser339. The chain crosses the membrane as a helical span at residues 382 to 402 (GMVVGIVAAAALCILILLYAM). The Cytoplasmic segment spans residues 403–456 (YKYRNRDEGSYQVDETRNYISNSAQSNGTLLKEKPPSSKGGHKKQKNKDKEYYV). Residues 424-456 (NSAQSNGTLLKEKPPSSKGGHKKQKNKDKEYYV) form a disordered region.

Belongs to the neurexin family. Weakly interacts with CBLN1 and CBLN2. Very weak binding, if any, to CBLN4. Specific isoforms bind neuroligins NLGN1, NLGN2 and NLGN3. Interacts with CLSTN3. In terms of processing, processed by alpha-secretase leading to the formation of an extracellular soluble protein as well as a C-terminal membrane-embedded fragment (CTF). Proteolysis of these CTFs by gamma-secretase releases intracellular domains (ICDs) and extracellular peptides. O-glycosylated; contains heparan sulfate. Heparan sulfate attachment is required for synapse development by mediating interactions with neuroligins.

It localises to the presynaptic cell membrane. It is found in the secreted. Neuronal cell surface protein that may be involved in cell recognition and cell adhesion. May mediate intracellular signaling. Functions as part of a trans-synaptic complex by binding to cerebellins and postsynaptic GRID1. This interaction helps regulate the activity of NMDA and AMPA receptors at hippocampal synapses without affecting synapse formation. NRXN3B-CBLN2-GRID1 complex transduce presynaptic signals into postsynaptic AMPAR response. The polypeptide is Neurexin-3-beta (NRXN3) (Bos taurus (Bovine)).